Consider the following 377-residue polypeptide: Ipis-1 (377 aa).

2 N-linked (GlcNAc...) asparagine glycosylation sites follow: asparagine 11 and asparagine 226.

The protein belongs to the serpin family. Female salivary gland. Not detected in midgut and other tissues.

The protein resides in the secreted. In terms of biological role, salivary protein with immunosuppressive properties that can modulate blood feeding of ticks on vertebrate species. Inhibits proliferation of bovine peripheral blood mononuclear cells (PBMCs). Inhibits IFN-gamma (IFNG) production by bovine PBMCs. The chain is Ipis-1 from Ixodes persulcatus (Taiga tick).